Here is a 262-residue protein sequence, read N- to C-terminus: Indole-3-glycerol phosphate synthase (262 aa).

Belongs to the TrpC family.

The enzyme catalyses 1-(2-carboxyphenylamino)-1-deoxy-D-ribulose 5-phosphate + H(+) = (1S,2R)-1-C-(indol-3-yl)glycerol 3-phosphate + CO2 + H2O. Its pathway is amino-acid biosynthesis; L-tryptophan biosynthesis; L-tryptophan from chorismate: step 4/5. In Chlorobium luteolum (strain DSM 273 / BCRC 81028 / 2530) (Pelodictyon luteolum), this protein is Indole-3-glycerol phosphate synthase.